Here is a 294-residue protein sequence, read N- to C-terminus: Putative isocitrate dehydrogenase [NAD] subunit-like 4 (294 aa).

Belongs to the isocitrate and isopropylmalate dehydrogenases family.

In terms of biological role, performs an essential role in the oxidative function of the citric acid cycle. In Arabidopsis thaliana (Mouse-ear cress), this protein is Putative isocitrate dehydrogenase [NAD] subunit-like 4 (IDH4).